A 167-amino-acid polypeptide reads, in one-letter code: Thioredoxin M-type, chloroplastic (167 aa).

Residues 1–53 (MAMETCFRAWALHAPAGSKDRLLVGNLVLPSKRALAPLSVGRVATRRPRHVCQ) constitute a chloroplast transit peptide. Residues 54-165 (SKNAVDEVVV…LTTLIDKYIG (112 aa)) enclose the Thioredoxin domain. Cysteine 89 and cysteine 92 form a disulfide bridge.

This sequence belongs to the thioredoxin family. Plant M-type subfamily. Forms a complex with heterodimeric ferredoxin-thioredoxin reductase (FTR) and ferredoxin.

Its subcellular location is the plastid. The protein localises to the chloroplast. Participates in various redox reactions through the reversible oxidation of the active center dithiol to a disulfide. The M form is known to activate NADP-malate dehydrogenase. In Zea mays (Maize), this protein is Thioredoxin M-type, chloroplastic (TRM1).